A 358-amino-acid polypeptide reads, in one-letter code: Probable arabinan endo-1,5-alpha-L-arabinosidase B (358 aa).

Positions 1-16 (MVLVATLFSLFTVSLC) are cleaved as a signal peptide. Aspartate 39 functions as the Proton acceptor in the catalytic mechanism. A glycan (N-linked (GlcNAc...) asparagine) is linked at asparagine 194. The disordered stretch occupies residues 202–227 (HLAKHPKTERVNSQDQNPDPLCRDSS). Glutamate 233 serves as the catalytic Proton donor.

The protein belongs to the glycosyl hydrolase 43 family.

It is found in the secreted. It carries out the reaction Endohydrolysis of (1-&gt;5)-alpha-arabinofuranosidic linkages in (1-&gt;5)-arabinans.. The protein operates within glycan metabolism; L-arabinan degradation. Its function is as follows. Endo-1,5-alpha-L-arabinanase involved in degradation of pectin. Its preferred substrate is linear 1,5-alpha-L-arabinan. This chain is Probable arabinan endo-1,5-alpha-L-arabinosidase B (abnB), found in Aspergillus flavus (strain ATCC 200026 / FGSC A1120 / IAM 13836 / NRRL 3357 / JCM 12722 / SRRC 167).